A 339-amino-acid polypeptide reads, in one-letter code: Glutamyl-tRNA reductase (339 aa).

Residues 50-53, Ser-102, 107-109, and Gln-113 contribute to the substrate site; these read TCHR and ETE. Catalysis depends on Cys-51, which acts as the Nucleophile. 181–186 is an NADP(+) binding site; sequence GYSDIN.

This sequence belongs to the glutamyl-tRNA reductase family. In terms of assembly, homodimer.

The enzyme catalyses (S)-4-amino-5-oxopentanoate + tRNA(Glu) + NADP(+) = L-glutamyl-tRNA(Glu) + NADPH + H(+). Its pathway is porphyrin-containing compound metabolism; protoporphyrin-IX biosynthesis; 5-aminolevulinate from L-glutamyl-tRNA(Glu): step 1/2. In terms of biological role, catalyzes the NADPH-dependent reduction of glutamyl-tRNA(Glu) to glutamate 1-semialdehyde (GSA). This is Glutamyl-tRNA reductase from Chlamydia pneumoniae (Chlamydophila pneumoniae).